An 814-amino-acid polypeptide reads, in one-letter code: Acyl-coenzyme A dehydrogenase (814 aa).

Residue E497 is the Proton acceptor of the active site.

It belongs to the acyl-CoA dehydrogenase family. FAD is required as a cofactor.

The catalysed reaction is a medium-chain 2,3-saturated fatty acyl-CoA + oxidized [electron-transfer flavoprotein] + H(+) = a medium-chain (2E)-enoyl-CoA + reduced [electron-transfer flavoprotein]. The enzyme catalyses a long-chain 2,3-saturated fatty acyl-CoA + oxidized [electron-transfer flavoprotein] + H(+) = a long-chain (2E)-enoyl-CoA + reduced [electron-transfer flavoprotein]. Its pathway is lipid metabolism; fatty acid beta-oxidation. Catalyzes the dehydrogenation of acyl-coenzymes A (acyl-CoAs) to 2-enoyl-CoAs, the first step of the beta-oxidation cycle of fatty acid degradation. Is required for the utilization of medium- and long-chain fatty acids as sole carbon sources for growth. Is needed for bacterial survival during carbone-source starvation. The chain is Acyl-coenzyme A dehydrogenase (fadE) from Salmonella typhi.